We begin with the raw amino-acid sequence, 291 residues long: Glycolipid transfer protein domain-containing protein 2 (291 aa).

Residue N276 is glycosylated (N-linked (GlcNAc...) asparagine).

Belongs to the GLTP family.

In Homo sapiens (Human), this protein is Glycolipid transfer protein domain-containing protein 2 (GLTPD2).